We begin with the raw amino-acid sequence, 204 residues long: Somatotropin (204 aa).

Residues 1-17 (MDRVILLLSVVSLGVSS) form the signal peptide. Position 18 is a pyrrolidone carboxylic acid (Q18). H36 contributes to the Zn(2+) binding site. An intrachain disulfide couples C69 to C177. A Zn(2+)-binding site is contributed by E186. A disulfide bridge connects residues C194 and C202.

It belongs to the somatotropin/prolactin family.

The protein resides in the secreted. Functionally, growth hormone plays an important role in growth control and is involved in the regulation of several anabolic processes. Implicated as an osmoregulatory substance important for seawater adaptation. The polypeptide is Somatotropin (gh) (Sebastes schlegelii (Korean rockfish)).